Reading from the N-terminus, the 263-residue chain is Caveolae-associated protein 3 (263 aa).

Residues 1–84 are interaction with CAVIN1; sequence MGESALEPGP…SNTLAQLLAK (84 aa). The segment at 20–78 is leucine-zipper; the sequence is VHAVTVVTLLEKLATMLEALRERQGGLAERQGGLAGSVRRIQSGLGALSRSHDTTSNTL. 2 positions are modified to phosphoserine: S62 and S70. A Glycyl lysine isopeptide (Lys-Gly) (interchain with G-Cter in SUMO2) cross-link involves residue K128. The tract at residues 135 to 203 is interaction with CAV1; sequence ARAFQKAPEL…SSRKGSEAAQ (69 aa). Residues 141–263 are disordered; that stretch reads APELLGPEDQ…RPVLQIESAA (123 aa). Residues 157 to 170 are compositionally biased toward acidic residues; sequence QPEDEVGESSDEEP. Phosphoserine is present on residues S165, S166, S173, and S199. Positions 219–234 are enriched in low complexity; the sequence is EGPAEGQPAAQPAMEP.

Belongs to the CAVIN family. In terms of assembly, component of the CAVIN complex composed of CAVIN1, CAVIN2, CAVIN3 and CAVIN4. Interacts with PRKCD and with phosphatidylserine. Phosphatidylserine may form a bridge between PKC and PKC-binding partners and stabilize the binding. Interacts with PER2. Interacts with CAVIN1 and EPS15L1. Interacts (via leucine-zipper domain) with CAV1 in a cholesterol-sensitive manner. In terms of processing, in vitro, phosphorylated by PRKCD.

It localises to the cytoplasm. Its subcellular location is the membrane. It is found in the caveola. The protein localises to the cytosol. Its function is as follows. Regulates the traffic and/or budding of caveolae. Plays a role in caveola formation in a tissue-specific manner. Required for the formation of caveolae in smooth muscle but not in the lung and heart endothelial cells. Regulates the equilibrium between cell surface-associated and cell surface-dissociated caveolae by promoting the rapid release of caveolae from the cell surface. Plays a role in the regulation of the circadian clock. Modulates the period length and phase of circadian gene expression and also regulates expression and interaction of the core clock components PER1/2 and CRY1/2. Seems to have an immune potentiation function, especially in the glioma. This chain is Caveolae-associated protein 3, found in Rattus norvegicus (Rat).